Here is a 207-residue protein sequence, read N- to C-terminus: Protein 6b (207 aa).

Residues 161-185 (NTLEEGEDDDDEMDDEGEAGGAEPR) are disordered. Residues 164-178 (EEGEDDDDEMDDEGE) are compositionally biased toward acidic residues.

Its function is as follows. Involved in tumor formation and increases auxin and cytokinin effects in host plants. The sequence is that of Protein 6b (6b) from Agrobacterium tumefaciens (strain 15955).